Reading from the N-terminus, the 351-residue chain is Sulfate/thiosulfate import ATP-binding protein CysA (351 aa).

An ABC transporter domain is found at 3–237 (ITVRNLHKRF…PRSAFVYEFL (235 aa)). An ATP-binding site is contributed by 35–42 (GPSGCGKT).

This sequence belongs to the ABC transporter superfamily. Sulfate/tungstate importer (TC 3.A.1.6) family. In terms of assembly, the complex is composed of two ATP-binding proteins (CysA), two transmembrane proteins (CysT and CysW) and a solute-binding protein (CysP).

Its subcellular location is the cell inner membrane. The catalysed reaction is sulfate(out) + ATP + H2O = sulfate(in) + ADP + phosphate + H(+). It carries out the reaction thiosulfate(out) + ATP + H2O = thiosulfate(in) + ADP + phosphate + H(+). Its function is as follows. Part of the ABC transporter complex CysAWTP involved in sulfate/thiosulfate import. Responsible for energy coupling to the transport system. This is Sulfate/thiosulfate import ATP-binding protein CysA from Burkholderia pseudomallei (strain K96243).